We begin with the raw amino-acid sequence, 826 residues long: Leucine--tRNA ligase (826 aa).

The short motif at 41–51 is the 'HIGH' region element; that stretch reads PYPSGKLHMGH. The 'KMSKS' region signature appears at 586-590; the sequence is KMSKS. K589 provides a ligand contact to ATP.

It belongs to the class-I aminoacyl-tRNA synthetase family.

It localises to the cytoplasm. The catalysed reaction is tRNA(Leu) + L-leucine + ATP = L-leucyl-tRNA(Leu) + AMP + diphosphate. The chain is Leucine--tRNA ligase from Natranaerobius thermophilus (strain ATCC BAA-1301 / DSM 18059 / JW/NM-WN-LF).